The chain runs to 253 residues: Ribonuclease HII (253 aa).

Positions 70–253 (DLIAGVDEVG…KTFAPIKDIL (184 aa)) constitute an RNase H type-2 domain. A divalent metal cation contacts are provided by D76, E77, and D168.

Belongs to the RNase HII family. Mn(2+) serves as cofactor. It depends on Mg(2+) as a cofactor.

It is found in the cytoplasm. It carries out the reaction Endonucleolytic cleavage to 5'-phosphomonoester.. Its function is as follows. Endonuclease that specifically degrades the RNA of RNA-DNA hybrids. This is Ribonuclease HII from Leuconostoc mesenteroides subsp. mesenteroides (strain ATCC 8293 / DSM 20343 / BCRC 11652 / CCM 1803 / JCM 6124 / NCDO 523 / NBRC 100496 / NCIMB 8023 / NCTC 12954 / NRRL B-1118 / 37Y).